The following is a 463-amino-acid chain: ATP-dependent protease ATPase subunit HslU (463 aa).

Residues valine 21, 63–68, aspartate 276, glutamate 341, and arginine 413 each bind ATP; that span reads GVGKTE.

The protein belongs to the ClpX chaperone family. HslU subfamily. A double ring-shaped homohexamer of HslV is capped on each side by a ring-shaped HslU homohexamer. The assembly of the HslU/HslV complex is dependent on binding of ATP.

It is found in the cytoplasm. ATPase subunit of a proteasome-like degradation complex; this subunit has chaperone activity. The binding of ATP and its subsequent hydrolysis by HslU are essential for unfolding of protein substrates subsequently hydrolyzed by HslV. HslU recognizes the N-terminal part of its protein substrates and unfolds these before they are guided to HslV for hydrolysis. This Thermotoga petrophila (strain ATCC BAA-488 / DSM 13995 / JCM 10881 / RKU-1) protein is ATP-dependent protease ATPase subunit HslU.